Here is a 410-residue protein sequence, read N- to C-terminus: Phosphoglycerate kinase (410 aa).

Substrate contacts are provided by residues 22–24 (DIN), Arg39, 62–65 (HQSR), Arg119, and Arg159. ATP-binding positions include Glu332 and 358-361 (GGHL).

Belongs to the phosphoglycerate kinase family. Homodimer.

Its subcellular location is the cytoplasm. It carries out the reaction (2R)-3-phosphoglycerate + ATP = (2R)-3-phospho-glyceroyl phosphate + ADP. It participates in carbohydrate degradation; glycolysis; pyruvate from D-glyceraldehyde 3-phosphate: step 2/5. This Methanothermus fervidus (strain ATCC 43054 / DSM 2088 / JCM 10308 / V24 S) protein is Phosphoglycerate kinase (pgk).